The sequence spans 192 residues: dCTP deaminase, dUMP-forming (192 aa).

DCTP contacts are provided by residues 101 to 106, D119, 127 to 129, Q148, Y162, and Q174; these read KSSLGR and TLE. E129 serves as the catalytic Proton donor/acceptor. The segment at 169-192 is disordered; the sequence is SRYQGQRGPTPSRSWQSWRTWPTR. A compositionally biased stretch (polar residues) spans 171–192; the sequence is YQGQRGPTPSRSWQSWRTWPTR.

Belongs to the dCTP deaminase family. Homotrimer.

The catalysed reaction is dCTP + 2 H2O = dUMP + NH4(+) + diphosphate. The protein operates within pyrimidine metabolism; dUMP biosynthesis; dUMP from dCTP: step 1/1. Functionally, bifunctional enzyme that catalyzes both the deamination of dCTP to dUTP and the hydrolysis of dUTP to dUMP without releasing the toxic dUTP intermediate. The chain is dCTP deaminase, dUMP-forming from Salinispora tropica (strain ATCC BAA-916 / DSM 44818 / JCM 13857 / NBRC 105044 / CNB-440).